Here is a 369-residue protein sequence, read N- to C-terminus: Phosphoribosyl pyrophosphate synthase-associated protein 2 (369 aa).

Residue Met1 is modified to N-acetylmethionine. Phosphoserine is present on residues Ser219, Ser227, and Ser233.

It belongs to the ribose-phosphate pyrophosphokinase family. In terms of assembly, binds to PRPS1 and PRPS2.

In terms of biological role, seems to play a negative regulatory role in 5-phosphoribose 1-diphosphate synthesis. This is Phosphoribosyl pyrophosphate synthase-associated protein 2 (PRPSAP2) from Bos taurus (Bovine).